Reading from the N-terminus, the 627-residue chain is Monoterpene synthase like 1, chloroplastic (627 aa).

A chloroplast-targeting transit peptide spans 1–50; the sequence is MDLISVLPSTSKSCVCMHKPLSSSTHKLKPFCRTIRILGMPRPRKSVLMA. Residues aspartate 378, aspartate 382, and aspartate 530 each coordinate Mg(2+). Residues 378 to 382 carry the DDXXD motif motif; it reads DDMYD.

It belongs to the terpene synthase family. Tpsd subfamily. The cofactor is Mg(2+). Requires Mn(2+) as cofactor.

The protein resides in the plastid. Its subcellular location is the chloroplast. Its pathway is terpene metabolism; oleoresin biosynthesis. It functions in the pathway secondary metabolite biosynthesis; terpenoid biosynthesis. In terms of biological role, monoterpene synthase (TPS) involved in the biosynthesis of monoterpene natural products included in conifer oleoresin secretions and volatile emissions; these compounds contribute to biotic and abiotic stress defense against herbivores and pathogens. The protein is Monoterpene synthase like 1, chloroplastic of Pinus contorta (Shore pine).